We begin with the raw amino-acid sequence, 402 residues long: NADH-quinone oxidoreductase subunit D (402 aa).

Belongs to the complex I 49 kDa subunit family. In terms of assembly, NDH-1 is composed of 14 different subunits. Subunits NuoB, C, D, E, F, and G constitute the peripheral sector of the complex.

The protein resides in the cell inner membrane. The catalysed reaction is a quinone + NADH + 5 H(+)(in) = a quinol + NAD(+) + 4 H(+)(out). Its function is as follows. NDH-1 shuttles electrons from NADH, via FMN and iron-sulfur (Fe-S) centers, to quinones in the respiratory chain. The immediate electron acceptor for the enzyme in this species is believed to be ubiquinone. Couples the redox reaction to proton translocation (for every two electrons transferred, four hydrogen ions are translocated across the cytoplasmic membrane), and thus conserves the redox energy in a proton gradient. The polypeptide is NADH-quinone oxidoreductase subunit D (Nitrobacter winogradskyi (strain ATCC 25391 / DSM 10237 / CIP 104748 / NCIMB 11846 / Nb-255)).